A 222-amino-acid polypeptide reads, in one-letter code: TPR repeat-containing protein BH2049 (222 aa).

TPR repeat units follow at residues 34-67 (AEPL…NREH) and 169-202 (PVGL…KEDK).

The chain is TPR repeat-containing protein BH2049 from Halalkalibacterium halodurans (strain ATCC BAA-125 / DSM 18197 / FERM 7344 / JCM 9153 / C-125) (Bacillus halodurans).